Here is a 382-residue protein sequence, read N- to C-terminus: Acetylornithine deacetylase (382 aa).

Residue histidine 79 participates in Zn(2+) binding. Residue aspartate 81 is part of the active site. Zn(2+) is bound at residue aspartate 111. Glutamate 143 is an active-site residue. Zn(2+)-binding residues include glutamate 144, glutamate 168, and histidine 354.

It belongs to the peptidase M20A family. ArgE subfamily. In terms of assembly, homodimer. Zn(2+) is required as a cofactor. The cofactor is Co(2+). Glutathione serves as cofactor.

Its subcellular location is the cytoplasm. The enzyme catalyses N(2)-acetyl-L-ornithine + H2O = L-ornithine + acetate. It participates in amino-acid biosynthesis; L-arginine biosynthesis; L-ornithine from N(2)-acetyl-L-ornithine (linear): step 1/1. Functionally, catalyzes the hydrolysis of the amide bond of N(2)-acetylated L-amino acids. Cleaves the acetyl group from N-acetyl-L-ornithine to form L-ornithine, an intermediate in L-arginine biosynthesis pathway, and a branchpoint in the synthesis of polyamines. The chain is Acetylornithine deacetylase from Pasteurella multocida (strain Pm70).